Reading from the N-terminus, the 163-residue chain is UPF0416 protein RBE_1121 (163 aa).

Belongs to the UPF0416 family.

The sequence is that of UPF0416 protein RBE_1121 from Rickettsia bellii (strain RML369-C).